Consider the following 566-residue polypeptide: Arginine--tRNA ligase (566 aa).

The short motif at 124–134 is the 'HIGH' region element; sequence ANPNGPLHIGH.

This sequence belongs to the class-I aminoacyl-tRNA synthetase family.

The protein resides in the cytoplasm. The catalysed reaction is tRNA(Arg) + L-arginine + ATP = L-arginyl-tRNA(Arg) + AMP + diphosphate. In Methanocaldococcus jannaschii (strain ATCC 43067 / DSM 2661 / JAL-1 / JCM 10045 / NBRC 100440) (Methanococcus jannaschii), this protein is Arginine--tRNA ligase (argS).